A 486-amino-acid chain; its full sequence is Glutamyl-tRNA(Gln) amidotransferase subunit A (486 aa).

Catalysis depends on charge relay system residues Lys-79 and Ser-154. The active-site Acyl-ester intermediate is the Ser-178.

It belongs to the amidase family. GatA subfamily. Heterotrimer of A, B and C subunits.

The enzyme catalyses L-glutamyl-tRNA(Gln) + L-glutamine + ATP + H2O = L-glutaminyl-tRNA(Gln) + L-glutamate + ADP + phosphate + H(+). Its function is as follows. Allows the formation of correctly charged Gln-tRNA(Gln) through the transamidation of misacylated Glu-tRNA(Gln) in organisms which lack glutaminyl-tRNA synthetase. The reaction takes place in the presence of glutamine and ATP through an activated gamma-phospho-Glu-tRNA(Gln). In Dehalococcoides mccartyi (strain ATCC BAA-2100 / JCM 16839 / KCTC 5957 / BAV1), this protein is Glutamyl-tRNA(Gln) amidotransferase subunit A.